The primary structure comprises 112 residues: Nitrogen regulatory protein P-II 1 (112 aa).

Residue Tyr-51 is modified to O-UMP-tyrosine.

This sequence belongs to the P(II) protein family. As to quaternary structure, homotrimer. Post-translationally, uridylylated/deuridylylated by GlnD.

In terms of biological role, P-II indirectly controls the transcription of the glutamine synthetase gene (GlnA). P-II prevents NR-II-catalyzed conversion of NR-I to NR-I-phosphate, the transcriptional activator of GlnA. When P-II is uridylylated to P-II-UMP, these events are reversed. When the ratio of Gln to 2-ketoglutarate decreases, P-II is uridylylated to P-II-UMP, which causes the deadenylation of glutamine synthetase by GlnE, so activating the enzyme. The protein is Nitrogen regulatory protein P-II 1 (glnB) of Escherichia coli O157:H7.